The sequence spans 373 residues: 3-isopropylmalate dehydrogenase (373 aa).

Residue 82 to 93 (GPKWGTGTVRPE) participates in NAD(+) binding. Substrate-binding residues include R100, R110, R139, and D231. Residues D231, D256, and D260 each coordinate Mg(2+). 295 to 306 (GSAPDLPANKVN) is an NAD(+) binding site.

It belongs to the isocitrate and isopropylmalate dehydrogenases family. Homodimer. Mg(2+) is required as a cofactor. The cofactor is Mn(2+).

Its subcellular location is the cytoplasm. The enzyme catalyses (2R,3S)-3-isopropylmalate + NAD(+) = 4-methyl-2-oxopentanoate + CO2 + NADH. It functions in the pathway amino-acid biosynthesis; L-leucine biosynthesis; L-leucine from 3-methyl-2-oxobutanoate: step 3/4. In terms of biological role, catalyzes the oxidation of 3-carboxy-2-hydroxy-4-methylpentanoate (3-isopropylmalate) to 3-carboxy-4-methyl-2-oxopentanoate. The product decarboxylates to 4-methyl-2 oxopentanoate. This is 3-isopropylmalate dehydrogenase (LEU2) from Candida albicans (Yeast).